The following is a 660-amino-acid chain: WD repeat-containing protein 48 homolog (660 aa).

WD repeat units follow at residues M23–H78, H84–T120, T123–A162, G174–K213, G216–S255, C258–L297, I300–E341, and P362–D401.

The protein belongs to the WD repeat WDR48 family.

Its function is as follows. Regulator of deubiquitinating complexes. Activates deubiquitination by increasing the catalytic turnover without increasing the affinity of deubiquitinating enzymes for the substrate. The polypeptide is WD repeat-containing protein 48 homolog (Brugia malayi (Filarial nematode worm)).